The chain runs to 423 residues: MKLDKSKELFDEAVNYLPGGVNSPVRAYKPYPFFAKSAKGSKIYDVDGNEYIDYCLGYGPLLFGHANEHIIEKSIEQLKLGTDYGVPSEKEVQLAKEVIKRVPCAQMVRFTNSGTEATMSAIRLARGITKRDKIIKFEGAYHGAHDAVLVKSGSGAAGLPDSPGIPTDTTKNTMLVEFNDEEALKKLINENKDEIACIIVEPVMGNIGCVPPKEGYLDFLREITLENGILLIIDEVITGFRISKGGAQEYYNVIPDLATFGKIVGGGFPIGAIAGKKEYMEQFTPSGKIYQAGTFSGNPMSINGGLAAFEVLDDNSYKQLHKSGEYFRNGIVDILDKLNINFHVNGVESMTQIYFTENEVYDYKTAQTSDTENFLKYFHLLLENGVFIAPSQYECGFISTSHSRDDLDKTLNAIEIALTKLYK.

The residue at position 262 (K262) is an N6-(pyridoxal phosphate)lysine.

Belongs to the class-III pyridoxal-phosphate-dependent aminotransferase family. HemL subfamily. It depends on pyridoxal 5'-phosphate as a cofactor.

Its subcellular location is the cytoplasm. The enzyme catalyses (S)-4-amino-5-oxopentanoate = 5-aminolevulinate. It functions in the pathway porphyrin-containing compound metabolism; protoporphyrin-IX biosynthesis; 5-aminolevulinate from L-glutamyl-tRNA(Glu): step 2/2. This Methanosphaera stadtmanae (strain ATCC 43021 / DSM 3091 / JCM 11832 / MCB-3) protein is Glutamate-1-semialdehyde 2,1-aminomutase.